The following is a 52-amino-acid chain: MAEERKLYMCMRCGRVFSKPEMEILPGIRCPYCNFKIIMKVRSPTVKRIPAV.

Residues cysteine 13, cysteine 30, and cysteine 33 each contribute to the Zn(2+) site.

The protein belongs to the archaeal Rpo12/eukaryotic RPC10 RNA polymerase subunit family. In terms of assembly, part of the RNA polymerase complex. Zn(2+) serves as cofactor.

It localises to the cytoplasm. The enzyme catalyses RNA(n) + a ribonucleoside 5'-triphosphate = RNA(n+1) + diphosphate. Its function is as follows. DNA-dependent RNA polymerase (RNAP) catalyzes the transcription of DNA into RNA using the four ribonucleoside triphosphates as substrates. The sequence is that of DNA-directed RNA polymerase subunit Rpo12 from Pyrobaculum neutrophilum (strain DSM 2338 / JCM 9278 / NBRC 100436 / V24Sta) (Thermoproteus neutrophilus).